Here is a 433-residue protein sequence, read N- to C-terminus: Histidine--tRNA ligase (433 aa).

This sequence belongs to the class-II aminoacyl-tRNA synthetase family. Homodimer.

It localises to the cytoplasm. It carries out the reaction tRNA(His) + L-histidine + ATP = L-histidyl-tRNA(His) + AMP + diphosphate + H(+). The protein is Histidine--tRNA ligase of Azoarcus sp. (strain BH72).